The chain runs to 54 residues: uncharacterized protein (54 aa).

This is an uncharacterized protein from Escherichia coli (strain K12).